We begin with the raw amino-acid sequence, 923 residues long: DNA mismatch repair protein MutS (923 aa).

G671–S678 is an ATP binding site.

The protein belongs to the DNA mismatch repair MutS family.

Functionally, this protein is involved in the repair of mismatches in DNA. It is possible that it carries out the mismatch recognition step. This protein has a weak ATPase activity. The protein is DNA mismatch repair protein MutS of Rhodopseudomonas palustris (strain BisB5).